The primary structure comprises 235 residues: Fibrillarin-like rRNA/tRNA 2'-O-methyltransferase (235 aa).

Residues 91 to 92, 110 to 111, 137 to 138, and 157 to 160 contribute to the S-adenosyl-L-methionine site; these read TT, EF, DA, and DVAQ.

This sequence belongs to the methyltransferase superfamily. Fibrillarin family. In terms of assembly, interacts with nop5. Component of box C/D small ribonucleoprotein (sRNP) particles that contain rpl7ae, FlpA and nop5, plus a guide RNA.

Involved in pre-rRNA and tRNA processing. Utilizes the methyl donor S-adenosyl-L-methionine to catalyze the site-specific 2'-hydroxyl methylation of ribose moieties in rRNA and tRNA. Site specificity is provided by a guide RNA that base pairs with the substrate. Methylation occurs at a characteristic distance from the sequence involved in base pairing with the guide RNA. This is Fibrillarin-like rRNA/tRNA 2'-O-methyltransferase from Pyrobaculum aerophilum (strain ATCC 51768 / DSM 7523 / JCM 9630 / CIP 104966 / NBRC 100827 / IM2).